The chain runs to 521 residues: Replicase polyprotein 1ab (521 aa).

The region spanning 1–58 (GGGGQSFLAADNAVLVSTQCYKRHSYVEIPSNLLVQNGMSLKDGANLYVYKRVNGAFV) is the AV-Nsp11N/CoV-Nsp15M domain. A NendoU domain is found at 75 to 216 (EPRSDVERDF…EDGSIKTCYP (142 aa)). Catalysis depends on residues histidine 104, histidine 119, lysine 159, lysine 263, aspartate 347, lysine 391, and glutamate 424. The Nidovirus-type SAM-dependent 2'-O-MTase domain occupies 219 to 518 (QSAWTCGYNM…NTSFTSDSFV (300 aa)).

In terms of biological role, the replicase polyprotein of coronaviruses is a multifunctional protein: it contains the activities necessary for the transcription of negative stranded RNA, leader RNA, subgenomic mRNAs and progeny virion RNA as well as proteinases responsible for the cleavage of the polyprotein into functional products. NendoU is a Mn(2+)-dependent, uridylate-specific enzyme, which leaves 2'-3'-cyclic phosphates 5' to the cleaved bond. The protein is Replicase polyprotein 1ab (rep) of Gallus gallus (Chicken).